A 257-amino-acid chain; its full sequence is 1-(5-phosphoribosyl)-5-[(5-phosphoribosylamino)methylideneamino] imidazole-4-carboxamide isomerase (257 aa).

Belongs to the HisA/HisF family.

The protein localises to the cytoplasm. The enzyme catalyses 1-(5-phospho-beta-D-ribosyl)-5-[(5-phospho-beta-D-ribosylamino)methylideneamino]imidazole-4-carboxamide = 5-[(5-phospho-1-deoxy-D-ribulos-1-ylimino)methylamino]-1-(5-phospho-beta-D-ribosyl)imidazole-4-carboxamide. The protein operates within amino-acid biosynthesis; L-histidine biosynthesis; L-histidine from 5-phospho-alpha-D-ribose 1-diphosphate: step 4/9. The sequence is that of 1-(5-phosphoribosyl)-5-[(5-phosphoribosylamino)methylideneamino] imidazole-4-carboxamide isomerase (his-7) from Neurospora crassa (strain ATCC 24698 / 74-OR23-1A / CBS 708.71 / DSM 1257 / FGSC 987).